A 215-amino-acid chain; its full sequence is Ras-related protein Rab-5A (215 aa).

GTP-binding residues include S29, A30, G32, K33, S34, S35, H46, E47, T52, and G78. S34 is a binding site for Mg(2+). Short sequence motifs (switch) lie at residues Q44–A56 and A77–A93. T52 is a binding site for Mg(2+). Phosphoserine is present on S84. The GTP site is built by N133, K134, D136, A164, and K165. The disordered stretch occupies residues E185 to N215. The span at E203–N215 shows a compositional bias: polar residues. 2 S-geranylgeranyl cysteine lipidation sites follow: C212 and C213.

This sequence belongs to the small GTPase superfamily. Rab family. In terms of assembly, interacts with GDI1; this promotes dissociation from membranes; phosphorylation at Ser-84 disrupts this interaction. Interacts with GDI2; phosphorylation at Ser-84 disrupts the interaction. Interacts with SGSM1 and SGSM3. Interacts with PIK3CB. Interacts with RIN1 and GAPVD1, which regulate its pathway, probably by acting as a GEF. Interacts with RINL. Interacts with ALS2CL, SUN2, ZFYVE20 and RUFY1. Interacts with RABEP1; one RABEP1 homodimer binds two RAB5A chains, but at opposite sides of the dimer. Interacts with OCRL and INPP5F. May be a component of a complex composed of RAB5A, DYN2 and PIK3C3. Does not interact with the BLOC-3 complex (heterodimer of HPS1 and HPS4). Interacts with CLN5. Interacts with APPL2. Interacts with F8A1/F8A2/F8A3. Found in a complex with F8A1/F8A2/F8A3, HTT and RAB5A; mediates the recruitment of HTT by RAB5A onto early endosomes. Interacts with ATP9A. Interacts with PPP1R21; mediates the recruitment of FERRY complex by RAB5A onto early endosomes. Mg(2+) is required as a cofactor. Post-translationally, phosphorylation of Ser-84 in the switch II region by LRRK2 prevents the association of RAB regulatory proteins, including RAB GDP dissociation inhibitors GDI1 and GDI2.

The protein resides in the cell membrane. Its subcellular location is the early endosome membrane. It localises to the melanosome. The protein localises to the cytoplasmic vesicle. It is found in the cell projection. The protein resides in the ruffle. Its subcellular location is the membrane. It localises to the cytoplasm. The protein localises to the cytosol. It is found in the phagosome membrane. The protein resides in the endosome membrane. It carries out the reaction GTP + H2O = GDP + phosphate + H(+). With respect to regulation, regulated by guanine nucleotide exchange factors (GEFs) including RINL, which promote the exchange of bound GDP for free GTP. Regulated by GTPase activating proteins (GAPs) which increase the GTP hydrolysis activity. Inhibited by GDP dissociation inhibitors (GDIs). In terms of biological role, the small GTPases Rab are key regulators of intracellular membrane trafficking, from the formation of transport vesicles to their fusion with membranes. Rabs cycle between an inactive GDP-bound form and an active GTP-bound form that is able to recruit to membranes different sets of downstream effectors directly responsible for vesicle formation, movement, tethering and fusion. RAB5A is required for the fusion of plasma membranes and early endosomes. Contributes to the regulation of filopodia extension. Required for the exosomal release of SDCBP, CD63, PDCD6IP and syndecan. Regulates maturation of apoptotic cell-containing phagosomes, probably downstream of DYN2 and PIK3C3. This is Ras-related protein Rab-5A (RAB5A) from Sus scrofa (Pig).